A 271-amino-acid polypeptide reads, in one-letter code: Imidazole glycerol phosphate synthase subunit HisF (271 aa).

Catalysis depends on residues aspartate 12 and aspartate 131.

The protein belongs to the HisA/HisF family. Heterodimer of HisH and HisF.

The protein localises to the cytoplasm. The enzyme catalyses 5-[(5-phospho-1-deoxy-D-ribulos-1-ylimino)methylamino]-1-(5-phospho-beta-D-ribosyl)imidazole-4-carboxamide + L-glutamine = D-erythro-1-(imidazol-4-yl)glycerol 3-phosphate + 5-amino-1-(5-phospho-beta-D-ribosyl)imidazole-4-carboxamide + L-glutamate + H(+). The protein operates within amino-acid biosynthesis; L-histidine biosynthesis; L-histidine from 5-phospho-alpha-D-ribose 1-diphosphate: step 5/9. In terms of biological role, IGPS catalyzes the conversion of PRFAR and glutamine to IGP, AICAR and glutamate. The HisF subunit catalyzes the cyclization activity that produces IGP and AICAR from PRFAR using the ammonia provided by the HisH subunit. This chain is Imidazole glycerol phosphate synthase subunit HisF, found in Methanospirillum hungatei JF-1 (strain ATCC 27890 / DSM 864 / NBRC 100397 / JF-1).